We begin with the raw amino-acid sequence, 484 residues long: Putative amidase AmiA2 (484 aa).

Catalysis depends on charge relay system residues lysine 93 and serine 167. Serine 191 serves as the catalytic Acyl-ester intermediate.

This sequence belongs to the amidase family.

It carries out the reaction a monocarboxylic acid amide + H2O = a monocarboxylate + NH4(+). The polypeptide is Putative amidase AmiA2 (amiA2) (Mycobacterium bovis (strain ATCC BAA-935 / AF2122/97)).